We begin with the raw amino-acid sequence, 745 residues long: MKIKTTVFGYPRIGPKRELKKALEDYWNWKISKVELLETANSLIIQNAKVIQSSGVDLIPSNEFSLYDFILDHSVMFNAVPKRFNRISDPLDRYFAMARGTQELPALEMTKWFNTNYHYIVPEIEDEEFELMENKPLREFALLRDSLSVKTKPVIVGPFTYLKSAKLNMDRVERLSEKILPAYKKLLIKLDAAGVEEIQIDEPAMVMDMEEREIELLTGLYRELTKGLTLKVYIQTYYEAVSAYEKLVFSLSVHGFGFDLVDGKENLENILTLGFPSDKVLIAGVVSGRDPWRTDFTVVMSMLERLFRVTDKIMLSNSSPLIHLPITVEAERGHIQEDILNMLSFANERLEELTILKRAINDGAALPARKSIVHEIFSKAEVRSKISSIDEKAILRKPEFQERYRMQMDSLKLPLFPTTTIGSFPQTKEVRKFRADYKNGKITEEEYKKFIFQEIEKAVKIQEELDIDVLVHGEFERTDMVEFFAEKLKGFAITKNGWVQSYGSRCVRPPVIYGDVWRDKALTVEETLYAQSLTPRPVKGIMTGAVTILQWSYPRKDISRREIAYQIALALKEEVLELEKRGIKIIQIDEPAFREGLPLKRNKQDEYFDWTINSFRLTTADVSPFTQIHTHMCYSDFNEIIDRIYALDADVISIEASRSKGEILSAFENFRYDHGIGLGVYDIHSPRVPSVEEMIEIIERSVSLIDKSLFWINPDCGLKTRGWQETVASLKNMVLAAKAMRKREV.

5-methyltetrahydropteroyltri-L-glutamate contacts are provided by residues 17 to 20 (RELK) and Lys111. L-homocysteine is bound by residues 421–423 (IGS) and Glu474. L-methionine contacts are provided by residues 421–423 (IGS) and Glu474. Residues 505-506 (RC) and Trp551 contribute to the 5-methyltetrahydropteroyltri-L-glutamate site. Position 589 (Asp589) interacts with L-homocysteine. Asp589 contacts L-methionine. Residue Glu595 coordinates 5-methyltetrahydropteroyltri-L-glutamate. Residues His631, Cys633, and Glu655 each contribute to the Zn(2+) site. Residue His684 is the Proton donor of the active site. Cys716 contributes to the Zn(2+) binding site.

The protein belongs to the vitamin-B12 independent methionine synthase family. Zn(2+) is required as a cofactor.

The enzyme catalyses 5-methyltetrahydropteroyltri-L-glutamate + L-homocysteine = tetrahydropteroyltri-L-glutamate + L-methionine. It functions in the pathway amino-acid biosynthesis; L-methionine biosynthesis via de novo pathway; L-methionine from L-homocysteine (MetE route): step 1/1. In terms of biological role, catalyzes the transfer of a methyl group from 5-methyltetrahydrofolate to homocysteine resulting in methionine formation. In Thermodesulfovibrio yellowstonii (strain ATCC 51303 / DSM 11347 / YP87), this protein is 5-methyltetrahydropteroyltriglutamate--homocysteine methyltransferase.